The following is a 1091-amino-acid chain: ATP-dependent helicase/deoxyribonuclease subunit B (1091 aa).

This sequence belongs to the helicase family. AddB/RexB type 2 subfamily. Heterodimer of AddA and RexB. Mg(2+) serves as cofactor.

The heterodimer acts as both an ATP-dependent DNA helicase and an ATP-dependent, dual-direction single-stranded exonuclease. Recognizes the chi site generating a DNA molecule suitable for the initiation of homologous recombination. This subunit has 5' -&gt; 3' nuclease activity but not helicase activity. This is ATP-dependent helicase/deoxyribonuclease subunit B from Streptococcus pneumoniae serotype 19F (strain G54).